The following is a 459-amino-acid chain: Cysteine--tRNA ligase (459 aa).

C27 contributes to the Zn(2+) binding site. The short motif at 29 to 39 (PTVYNFVHIGN) is the 'HIGH' region element. Zn(2+) is bound by residues C211, H236, and E240. A 'KMSKS' region motif is present at residues 269 to 273 (KMSKS). K272 is an ATP binding site.

This sequence belongs to the class-I aminoacyl-tRNA synthetase family. As to quaternary structure, monomer. Requires Zn(2+) as cofactor.

It is found in the cytoplasm. The catalysed reaction is tRNA(Cys) + L-cysteine + ATP = L-cysteinyl-tRNA(Cys) + AMP + diphosphate. The polypeptide is Cysteine--tRNA ligase (Ehrlichia canis (strain Jake)).